The following is an 87-amino-acid chain: Putative regulatory protein GTNG_1019 (87 aa).

Belongs to the RemA family.

The protein is Putative regulatory protein GTNG_1019 of Geobacillus thermodenitrificans (strain NG80-2).